The sequence spans 447 residues: Serine/threonine-protein phosphatase 2A 55 kDa regulatory subunit B alpha isoform (447 aa).

At Ala2 the chain carries N-acetylalanine. 7 WD repeats span residues 11–80 (QWCF…FQSH), 94–174 (EKIN…IFAN), 175–218 (AHTY…VDIK), 227–270 (EVIT…KLFE), 288–325 (ISDV…TYQV), 347–381 (ECCW…TLEA), and 414–446 (DFNK…QDKV).

The protein belongs to the phosphatase 2A regulatory subunit B family. PP2A consists of a common heterodimeric core enzyme, composed of a 36 kDa catalytic subunit (subunit C) and a 65 kDa constant regulatory subunit (PR65 or subunit A), that associates with a variety of regulatory subunits. Proteins that associate with the core dimer include three families of regulatory subunits B (the R2/B/PR55/B55, R3/B''/PR72/PR130/PR59 and R5/B'/B56 families), the 48 kDa variable regulatory subunit, viral proteins, and cell signaling molecules. Interacts with the PP2A C catalytic subunit PPP2CA. Interacts with the PP2A A subunit PPP2R1A. Found in a complex with at least ARL2, PPP2CB, PPP2R1A, PPP2R2A, PPP2R5E and TBCD. Interacts with MFHAS1; the interaction is direct. Interacts with PABIR1/FAM122A (via its N-terminus); the interaction is direct and inhibits PP2A activity. Interacts with ARPP19; the interaction is direct and inhibits PP2A activity. Interacts with CRTC3. In terms of tissue distribution, brain.

Functionally, substrate-recognition subunit of protein phosphatase 2A (PP2A) that plays a key role in cell cycle by controlling mitosis entry and exit. Involved in chromosome clustering during late mitosis by mediating dephosphorylation of MKI67. Essential for serine/threonine-protein phosphatase 2A-mediated dephosphorylation of WEE1, preventing its ubiquitin-mediated proteolysis, increasing WEE1 protein levels, and promoting the G2/M checkpoint. This is Serine/threonine-protein phosphatase 2A 55 kDa regulatory subunit B alpha isoform (Ppp2r2a) from Rattus norvegicus (Rat).